A 484-amino-acid polypeptide reads, in one-letter code: Cobyric acid synthase (484 aa).

The 188-residue stretch at 251–438 folds into the GATase cobBQ-type domain; sequence ALKIAVPVLP…LHGLFCSDAY (188 aa). Catalysis depends on Cys333, which acts as the Nucleophile. His430 is an active-site residue.

It belongs to the CobB/CobQ family. CobQ subfamily.

It participates in cofactor biosynthesis; adenosylcobalamin biosynthesis. Functionally, catalyzes amidations at positions B, D, E, and G on adenosylcobyrinic A,C-diamide. NH(2) groups are provided by glutamine, and one molecule of ATP is hydrogenolyzed for each amidation. In Rhizobium rhizogenes (strain K84 / ATCC BAA-868) (Agrobacterium radiobacter), this protein is Cobyric acid synthase.